Here is a 270-residue protein sequence, read N- to C-terminus: Putative pyruvate, phosphate dikinase regulatory protein 2 (270 aa).

151-158 contacts ADP; it reads GVSRTSKT.

The protein belongs to the pyruvate, phosphate/water dikinase regulatory protein family. PDRP subfamily.

The enzyme catalyses N(tele)-phospho-L-histidyl/L-threonyl-[pyruvate, phosphate dikinase] + ADP = N(tele)-phospho-L-histidyl/O-phospho-L-threonyl-[pyruvate, phosphate dikinase] + AMP + H(+). The catalysed reaction is N(tele)-phospho-L-histidyl/O-phospho-L-threonyl-[pyruvate, phosphate dikinase] + phosphate + H(+) = N(tele)-phospho-L-histidyl/L-threonyl-[pyruvate, phosphate dikinase] + diphosphate. Its function is as follows. Bifunctional serine/threonine kinase and phosphorylase involved in the regulation of the pyruvate, phosphate dikinase (PPDK) by catalyzing its phosphorylation/dephosphorylation. The chain is Putative pyruvate, phosphate dikinase regulatory protein 2 from Listeria innocua serovar 6a (strain ATCC BAA-680 / CLIP 11262).